A 218-amino-acid chain; its full sequence is Octanoyltransferase (218 aa).

The BPL/LPL catalytic domain maps to 30 to 217; the sequence is GEAGELVWLV…SFARNFPPLA (188 aa). Residues 68 to 75, 148 to 150, and 161 to 163 contribute to the substrate site; these read RGGQYTYH, AIG, and GIA. Cys-179 (acyl-thioester intermediate) is an active-site residue.

Belongs to the LipB family.

The protein localises to the cytoplasm. The catalysed reaction is octanoyl-[ACP] + L-lysyl-[protein] = N(6)-octanoyl-L-lysyl-[protein] + holo-[ACP] + H(+). It participates in protein modification; protein lipoylation via endogenous pathway; protein N(6)-(lipoyl)lysine from octanoyl-[acyl-carrier-protein]: step 1/2. Functionally, catalyzes the transfer of endogenously produced octanoic acid from octanoyl-acyl-carrier-protein onto the lipoyl domains of lipoate-dependent enzymes. Lipoyl-ACP can also act as a substrate although octanoyl-ACP is likely to be the physiological substrate. The sequence is that of Octanoyltransferase from Paracoccus denitrificans (strain Pd 1222).